A 236-amino-acid polypeptide reads, in one-letter code: Phosphoribosylaminoimidazole-succinocarboxamide synthase (236 aa).

Belongs to the SAICAR synthetase family.

The enzyme catalyses 5-amino-1-(5-phospho-D-ribosyl)imidazole-4-carboxylate + L-aspartate + ATP = (2S)-2-[5-amino-1-(5-phospho-beta-D-ribosyl)imidazole-4-carboxamido]succinate + ADP + phosphate + 2 H(+). The protein operates within purine metabolism; IMP biosynthesis via de novo pathway; 5-amino-1-(5-phospho-D-ribosyl)imidazole-4-carboxamide from 5-amino-1-(5-phospho-D-ribosyl)imidazole-4-carboxylate: step 1/2. The sequence is that of Phosphoribosylaminoimidazole-succinocarboxamide synthase from Campylobacter curvus (strain 525.92).